Consider the following 200-residue polypeptide: Holliday junction branch migration complex subunit RuvA (200 aa).

Positions 1–64 (MFAYFKGSLV…EDALQLYGFF (64 aa)) are domain I. Residues 65–143 (KEEERQLFRL…KLPLVTPAAG (79 aa)) form a domain II region. Residues 143–147 (GKAAM) form a flexible linker region. The domain III stretch occupies residues 148-200 (PSHHVKDDAVHALVTLGFSRLLAQKAVSALLEEKPEQSVEEVIKYALATIHNS).

This sequence belongs to the RuvA family. As to quaternary structure, homotetramer. Forms an RuvA(8)-RuvB(12)-Holliday junction (HJ) complex. HJ DNA is sandwiched between 2 RuvA tetramers; dsDNA enters through RuvA and exits via RuvB. An RuvB hexamer assembles on each DNA strand where it exits the tetramer. Each RuvB hexamer is contacted by two RuvA subunits (via domain III) on 2 adjacent RuvB subunits; this complex drives branch migration. In the full resolvosome a probable DNA-RuvA(4)-RuvB(12)-RuvC(2) complex forms which resolves the HJ.

The protein localises to the cytoplasm. Functionally, the RuvA-RuvB-RuvC complex processes Holliday junction (HJ) DNA during genetic recombination and DNA repair, while the RuvA-RuvB complex plays an important role in the rescue of blocked DNA replication forks via replication fork reversal (RFR). RuvA specifically binds to HJ cruciform DNA, conferring on it an open structure. The RuvB hexamer acts as an ATP-dependent pump, pulling dsDNA into and through the RuvAB complex. HJ branch migration allows RuvC to scan DNA until it finds its consensus sequence, where it cleaves and resolves the cruciform DNA. In Chlorobium phaeobacteroides (strain DSM 266 / SMG 266 / 2430), this protein is Holliday junction branch migration complex subunit RuvA.